A 270-amino-acid chain; its full sequence is Undecaprenyl-diphosphatase 3 (270 aa).

The next 7 membrane-spanning stretches (helical) occupy residues 5-25 (YYIL…PIPI), 42-62 (IEGF…VLLI), 89-109 (FFFI…GVLF), 117-137 (LKGV…LWII), 192-212 (FSFL…ITDI), 220-240 (TLFV…YISL), and 250-270 (GNLK…LIFL).

It belongs to the UppP family.

Its subcellular location is the cell membrane. It catalyses the reaction di-trans,octa-cis-undecaprenyl diphosphate + H2O = di-trans,octa-cis-undecaprenyl phosphate + phosphate + H(+). Its function is as follows. Catalyzes the dephosphorylation of undecaprenyl diphosphate (UPP). Confers resistance to bacitracin. The chain is Undecaprenyl-diphosphatase 3 from Bacillus anthracis.